A 562-amino-acid chain; its full sequence is Tetratricopeptide repeat protein 39A (562 aa).

TPR repeat units lie at residues Ala-273–Trp-306, Cys-463–Ile-496, and Pro-504–Tyr-537.

It belongs to the TTC39 family.

This Xenopus tropicalis (Western clawed frog) protein is Tetratricopeptide repeat protein 39A (ttc39a).